A 617-amino-acid polypeptide reads, in one-letter code: MTPYRSRTSTHGRTMAGARGLWRATGMKDEDFGKPIIAIANSFTQFVPGHVHLKDMGQLVAAEIAAAGGVAKEFNTIAVDDGIAMGHDGMLYSLPSRELIADAVEYMVNAHCADALVCISNCDKITPGMLMAAMRLNIPTIFVSGGPMEAGKVVLGGTERSVDLIDAMVVAGDAKVSDADVETIERSACPTCGSCSGMFTANSMNCLTEALGLSLPGNGSALATHVARRGLFEEAGRRIVDLAKRRYEHDDESTLPRAIASFKAFENAMSVDIAMGGSTNTVLHLLAAAQEGEVPFTMADIDRLSRRIPHLCKVSPSTADFYMEDVHRAGGVMGIMGELSRAGLLHEDLPTVHTPTLKAALDHWDIRRPVDDAVRAFFRAAPGGVRTVVPFSTDRLWDSLDDDRETGCIRDLDHAYSRDGGLAVLYGNLAPNGCIVKTAGVDASILTFTGTVRLCESQDEAVARILGGEIQAGDVVLVRYEGPKGGPGMQEMLYPTSYLKSRGLGKVCALVTDGRFSGGSSGLSIGHVSPEAAAGGPIGLVEEGDIIVIDIPARSIVVDLSDEELAARRSAMEARGRAGWKPAKPRKRAVSPALRAYAALTTSADRGAVRDVSQVER.

A Mg(2+)-binding site is contributed by Asp81. Cys122 is a binding site for [2Fe-2S] cluster. 2 residues coordinate Mg(2+): Asp123 and Lys124. Lys124 is modified (N6-carboxylysine). Cys195 is a binding site for [2Fe-2S] cluster. A Mg(2+)-binding site is contributed by Glu491. Ser517 (proton acceptor) is an active-site residue.

It belongs to the IlvD/Edd family. As to quaternary structure, homodimer. Requires [2Fe-2S] cluster as cofactor. The cofactor is Mg(2+).

The catalysed reaction is (2R)-2,3-dihydroxy-3-methylbutanoate = 3-methyl-2-oxobutanoate + H2O. The enzyme catalyses (2R,3R)-2,3-dihydroxy-3-methylpentanoate = (S)-3-methyl-2-oxopentanoate + H2O. Its pathway is amino-acid biosynthesis; L-isoleucine biosynthesis; L-isoleucine from 2-oxobutanoate: step 3/4. It participates in amino-acid biosynthesis; L-valine biosynthesis; L-valine from pyruvate: step 3/4. In terms of biological role, functions in the biosynthesis of branched-chain amino acids. Catalyzes the dehydration of (2R,3R)-2,3-dihydroxy-3-methylpentanoate (2,3-dihydroxy-3-methylvalerate) into 2-oxo-3-methylpentanoate (2-oxo-3-methylvalerate) and of (2R)-2,3-dihydroxy-3-methylbutanoate (2,3-dihydroxyisovalerate) into 2-oxo-3-methylbutanoate (2-oxoisovalerate), the penultimate precursor to L-isoleucine and L-valine, respectively. This chain is Dihydroxy-acid dehydratase, found in Rhodospirillum rubrum (strain ATCC 11170 / ATH 1.1.1 / DSM 467 / LMG 4362 / NCIMB 8255 / S1).